The primary structure comprises 160 residues: Protein MGF 110-13L (160 aa).

2 consecutive transmembrane segments (helical) span residues 13 to 33 (HCCF…FAYY) and 35 to 55 (NLHL…IWLS).

It belongs to the asfivirus MGF 110 family.

The protein localises to the host membrane. Its function is as follows. Plays a role in virus cell tropism, and may be required for efficient virus replication in macrophages. The polypeptide is Protein MGF 110-13L (Ornithodoros (relapsing fever ticks)).